A 464-amino-acid chain; its full sequence is 3-isopropylmalate dehydratase large subunit (464 aa).

The [4Fe-4S] cluster site is built by C337, C397, and C400.

This sequence belongs to the aconitase/IPM isomerase family. LeuC type 1 subfamily. In terms of assembly, heterodimer of LeuC and LeuD. Requires [4Fe-4S] cluster as cofactor.

The catalysed reaction is (2R,3S)-3-isopropylmalate = (2S)-2-isopropylmalate. It participates in amino-acid biosynthesis; L-leucine biosynthesis; L-leucine from 3-methyl-2-oxobutanoate: step 2/4. Functionally, catalyzes the isomerization between 2-isopropylmalate and 3-isopropylmalate, via the formation of 2-isopropylmaleate. In Bacillus cereus (strain AH820), this protein is 3-isopropylmalate dehydratase large subunit.